Consider the following 359-residue polypeptide: MFPTGWRPKLSESIAASRMLWQPMAAVAVVQIGLLWFSPPVWGQDMVSPPPPIADEPLTVNTGIYLIECYSLDDKAETFKVNAFLSLSWKDRRLAFDPVRSGVRVKTYEPEAIWIPEIRFVNVENARDADVVDISVSPDGTVQYLERFSARVLSPLDFRRYPFDSQTLHIYLIVRSVDTRNIVLAVDLEKVGKNDDVFLTGWDIESFTAVVKPANFALEDRLESKLDYQLRISRQYFSYIPNIILPMLFILFISWTAFWSTSYEANVTLVVSTLIAHIAFNILVETNLPKTPYMTYTGAIIFMIYLFYFVAVIEVTVQHYLKVESQPARAASITRASRIAFPVVFLLANIILAFLFFGF.

The first 43 residues, 1-43, serve as a signal peptide directing secretion; the sequence is MFPTGWRPKLSESIAASRMLWQPMAAVAVVQIGLLWFSPPVWG. The Periplasmic segment spans residues 44–235; the sequence is QDMVSPPPPI…LDYQLRISRQ (192 aa). A helical membrane pass occupies residues 236–258; it reads YFSYIPNIILPMLFILFISWTAF. Residues 259–261 lie on the Cytoplasmic side of the membrane; sequence WST. The helical transmembrane segment at 262-286 threads the bilayer; the sequence is SYEANVTLVVSTLIAHIAFNILVET. Over 287-294 the chain is Periplasmic; the sequence is NLPKTPYM. The helical transmembrane segment at 295 to 323 threads the bilayer; it reads TYTGAIIFMIYLFYFVAVIEVTVQHYLKV. Residues 324 to 326 lie on the Cytoplasmic side of the membrane; it reads ESQ. A helical transmembrane segment spans residues 327–359; it reads PARAASITRASRIAFPVVFLLANIILAFLFFGF.

This sequence belongs to the ligand-gated ion channel (TC 1.A.9) family. As to quaternary structure, homopentamer.

The protein localises to the cell inner membrane. Tetraethylammonium (TEA) and tetrabutylammonium (TBA) inhibit the proton-activated currents in a dose- and voltage-dependent manner in vitro, whereas the blocker of acid sensing ion channels, amiloride, has no effect. Channel current of GLIC can be inhibited by inhaled and intravenous general anesthetics at and below concentrations used clinically. Ion conduction is also inhibited by lidocaine and by divalent transition metal ions such as cadmium ions. Functionally, cationic channel with similar permeabilities for Na(+) and K(+), that is activated by an increase of the proton concentration on the extracellular side. Displays no permeability for chloride ions. Shows slow kinetics of activation, no desensitization and a single channel conductance of 8 pS. Might contribute to adaptation to external pH change. This Gloeobacter violaceus (strain ATCC 29082 / PCC 7421) protein is Proton-gated ion channel (glvI).